The following is a 439-amino-acid chain: MATKEYFPGIGKIKFEGKDSKNPMAFRYYDAEKMINGRSMKDWLKFAMAWWHTLCAEGGDQFGGGTKQFPWNGDPDPVQAAKNKMDAGFEFMQKMGIGYYCFHDVDLVTEADSIEAYEANLKELVAYAKQKQAETGIKLLWGTANVFSHARYMNGAATNPDFDVVARAAVQIKNAIDATIELGGTNYVFWGGREGYMSLLNTDQKREKEHLAQMLTIARDYGRARGFKGTFLIEPKPMEPTKHQYDVDTETVIGFLKAHGLNQDFKVNIEVNHATLAGHTFEHELAVAVDNGMLGSIDANRGDYQNGWDTDQFPIDNFELTQAMMQIIRNDGLGNGGTNFDAKTRRNSTDPEDIFIAHIAGMDAMARALESAANLLNESPYQKMLSDRYASFDAGKGKEFEEGKLSLEELVAYAKANGEPKQTSGQQELYEALVNIYSL.

Catalysis depends on residues His103 and Asp106. 7 residues coordinate Mg(2+): Glu234, Glu270, His273, Asp298, Asp309, Asp311, and Asp341.

The protein belongs to the xylose isomerase family. As to quaternary structure, homotetramer. Mg(2+) serves as cofactor.

It localises to the cytoplasm. The catalysed reaction is alpha-D-xylose = alpha-D-xylulofuranose. This Bacteroides fragilis (strain ATCC 25285 / DSM 2151 / CCUG 4856 / JCM 11019 / LMG 10263 / NCTC 9343 / Onslow / VPI 2553 / EN-2) protein is Xylose isomerase.